The chain runs to 531 residues: Light-independent protochlorophyllide reductase subunit B (531 aa).

Aspartate 36 contributes to the [4Fe-4S] cluster binding site. Aspartate 291 acts as the Proton donor in catalysis. 426–427 lines the substrate pocket; the sequence is GL.

This sequence belongs to the ChlB/BchB/BchZ family. Protochlorophyllide reductase is composed of three subunits; ChlL, ChlN and ChlB. Forms a heterotetramer of two ChlB and two ChlN subunits. [4Fe-4S] cluster is required as a cofactor.

It carries out the reaction chlorophyllide a + oxidized 2[4Fe-4S]-[ferredoxin] + 2 ADP + 2 phosphate = protochlorophyllide a + reduced 2[4Fe-4S]-[ferredoxin] + 2 ATP + 2 H2O. Its pathway is porphyrin-containing compound metabolism; chlorophyll biosynthesis (light-independent). Component of the dark-operative protochlorophyllide reductase (DPOR) that uses Mg-ATP and reduced ferredoxin to reduce ring D of protochlorophyllide (Pchlide) to form chlorophyllide a (Chlide). This reaction is light-independent. The NB-protein (ChlN-ChlB) is the catalytic component of the complex. This Prochlorococcus marinus (strain MIT 9211) protein is Light-independent protochlorophyllide reductase subunit B.